The chain runs to 62 residues: Omega-lycotoxin-Am1e (62 aa).

Residues 1 to 15 (EDEVEETLPVAEEGR) constitute a propeptide that is removed on maturation. Cystine bridges form between cysteine 19–cysteine 34, cysteine 26–cysteine 39, cysteine 33–cysteine 59, and cysteine 41–cysteine 57.

This sequence belongs to the neurotoxin omega-lctx family. Expressed by the venom gland.

It is found in the secreted. Its function is as follows. Modulates Cav2.1/CACNA1A voltage-gated calcium channels (P/Q-type currents) in rat cerebellar Purkinje cells and hippocampal CA1-CA3 neurons. At saturating concentrations (&gt;10 nM) decelerates activation kinetics and slightly increases peak amplitude without affecting deactivation kinetics. In vivo, does not cause death when intravenously injected into mice. In rat models, through its activity on Cav2.1/CACNA1A, has an ameliorative effect on memory defects provoked by hyperstimulation of N-methyl-D-aspartate receptors (NMDARs) in the hippocampus. In Alopecosa marikovskyi (Wolf spider), this protein is Omega-lycotoxin-Am1e.